Consider the following 495-residue polypeptide: Iroquois-class homeodomain protein irx-4-B (495 aa).

A DNA-binding region (homeobox; TALE-type) is located at residues 141–203; that stretch reads GSTRRKNATR…NARRRLKKEN (63 aa). Residues 203-245 are disordered; the sequence is NKMTWPPRNKCSDEKRPYDEEEEEEEDSQKATIKNEKKTVDEE. Over residues 235–245 the composition is skewed to basic and acidic residues; it reads IKNEKKTVDEE.

Belongs to the TALE/IRO homeobox family.

It localises to the nucleus. In terms of biological role, acts partially redundantly with other irx members in neural patterning. Required for formation of the posterior forebrain, midbrain, hindbrain, and to a lesser extent, spinal cord. Patterns the neuroectoderm in both the anterior/posterior and dorsal/ventral axes. Does not appear to play a role in pronephros kidney development. The sequence is that of Iroquois-class homeodomain protein irx-4-B (irx4-b) from Xenopus laevis (African clawed frog).